We begin with the raw amino-acid sequence, 232 residues long: 7-cyano-7-deazaguanine synthase 1 (232 aa).

An ATP-binding site is contributed by 7-17 (CSGGLDSVSLA). Positions 185, 193, 196, and 199 each coordinate Zn(2+).

Belongs to the QueC family. The cofactor is Zn(2+).

It carries out the reaction 7-carboxy-7-deazaguanine + NH4(+) + ATP = 7-cyano-7-deazaguanine + ADP + phosphate + H2O + H(+). It functions in the pathway purine metabolism; 7-cyano-7-deazaguanine biosynthesis. In terms of biological role, catalyzes the ATP-dependent conversion of 7-carboxy-7-deazaguanine (CDG) to 7-cyano-7-deazaguanine (preQ(0)). The chain is 7-cyano-7-deazaguanine synthase 1 from Mesorhizobium japonicum (strain LMG 29417 / CECT 9101 / MAFF 303099) (Mesorhizobium loti (strain MAFF 303099)).